A 296-amino-acid chain; its full sequence is tRNA (guanine(9)-N1)-methyltransferase (296 aa).

The tract at residues 1–33 is disordered; sequence MTPETNNDETLSRPKPRAALPPVPEGMSKSQWK. In terms of domain architecture, SAM-dependent MTase TRM10-type spans 85–274; sequence TPRVNVNQKD…SVLPARKLAE (190 aa). Residues 181 to 182, Gly201, 205 to 209, Cys213, Leu227, and 239 to 241 contribute to the S-adenosyl-L-methionine site; these read LT, DKNRH, and KVL. Asp205 acts as the Proton acceptor in catalysis. The disordered stretch occupies residues 277 to 296; the sequence is DHAQESNSSSPAEEQDAQDI.

Belongs to the class IV-like SAM-binding methyltransferase superfamily. TRM10 family. As to quaternary structure, monomer.

The protein resides in the cytoplasm. It localises to the nucleus. It carries out the reaction guanosine(9) in tRNA + S-adenosyl-L-methionine = N(1)-methylguanosine(9) in tRNA + S-adenosyl-L-homocysteine + H(+). S-adenosyl-L-methionine-dependent guanine N(1)-methyltransferase that catalyzes the formation of N(1)-methylguanine at position 9 (m1G9) in cytoplasmic tRNA. The chain is tRNA (guanine(9)-N1)-methyltransferase from Eremothecium gossypii (strain ATCC 10895 / CBS 109.51 / FGSC 9923 / NRRL Y-1056) (Yeast).